A 428-amino-acid chain; its full sequence is Gamma-glutamyl phosphate reductase (428 aa).

The protein belongs to the gamma-glutamyl phosphate reductase family.

It is found in the cytoplasm. The enzyme catalyses L-glutamate 5-semialdehyde + phosphate + NADP(+) = L-glutamyl 5-phosphate + NADPH + H(+). Its pathway is amino-acid biosynthesis; L-proline biosynthesis; L-glutamate 5-semialdehyde from L-glutamate: step 2/2. Catalyzes the NADPH-dependent reduction of L-glutamate 5-phosphate into L-glutamate 5-semialdehyde and phosphate. The product spontaneously undergoes cyclization to form 1-pyrroline-5-carboxylate. This chain is Gamma-glutamyl phosphate reductase, found in Treponema pallidum (strain Nichols).